A 309-amino-acid chain; its full sequence is GTP cyclohydrolase MptA (309 aa).

The protein belongs to the GTP cyclohydrolase IV family. Homodimer. The cofactor is Fe(2+).

It catalyses the reaction GTP + H2O = 7,8-dihydroneopterin 2',3'-cyclic phosphate + formate + diphosphate + H(+). Its pathway is cofactor biosynthesis; 5,6,7,8-tetrahydromethanopterin biosynthesis. Functionally, converts GTP to 7,8-dihydro-D-neopterin 2',3'-cyclic phosphate, the first intermediate in the biosynthesis of coenzyme methanopterin. The chain is GTP cyclohydrolase MptA from Haloarcula marismortui (strain ATCC 43049 / DSM 3752 / JCM 8966 / VKM B-1809) (Halobacterium marismortui).